A 111-amino-acid polypeptide reads, in one-letter code: Phosphoribosyl-ATP pyrophosphatase (111 aa).

This sequence belongs to the PRA-PH family.

The protein localises to the cytoplasm. It carries out the reaction 1-(5-phospho-beta-D-ribosyl)-ATP + H2O = 1-(5-phospho-beta-D-ribosyl)-5'-AMP + diphosphate + H(+). The protein operates within amino-acid biosynthesis; L-histidine biosynthesis; L-histidine from 5-phospho-alpha-D-ribose 1-diphosphate: step 2/9. The chain is Phosphoribosyl-ATP pyrophosphatase from Pseudomonas putida (strain GB-1).